Consider the following 389-residue polypeptide: Succinate--CoA ligase [ADP-forming] subunit beta (389 aa).

The 228-residue stretch at 9–236 folds into the ATP-grasp domain; it reads RDLFEAHGVP…ERTEDPLEAK (228 aa). ATP contacts are provided by residues Lys-45, 52 to 54, Ala-94, and Glu-99; that span reads GRG. Mg(2+)-binding residues include Asn-191 and Asp-205. Substrate contacts are provided by residues Asn-256 and 318–320; that span reads GIT.

It belongs to the succinate/malate CoA ligase beta subunit family. In terms of assembly, heterotetramer of two alpha and two beta subunits. It depends on Mg(2+) as a cofactor.

The enzyme catalyses succinate + ATP + CoA = succinyl-CoA + ADP + phosphate. The catalysed reaction is GTP + succinate + CoA = succinyl-CoA + GDP + phosphate. It functions in the pathway carbohydrate metabolism; tricarboxylic acid cycle; succinate from succinyl-CoA (ligase route): step 1/1. Functionally, succinyl-CoA synthetase functions in the citric acid cycle (TCA), coupling the hydrolysis of succinyl-CoA to the synthesis of either ATP or GTP and thus represents the only step of substrate-level phosphorylation in the TCA. The beta subunit provides nucleotide specificity of the enzyme and binds the substrate succinate, while the binding sites for coenzyme A and phosphate are found in the alpha subunit. The sequence is that of Succinate--CoA ligase [ADP-forming] subunit beta from Micrococcus luteus (strain ATCC 4698 / DSM 20030 / JCM 1464 / CCM 169 / CCUG 5858 / IAM 1056 / NBRC 3333 / NCIMB 9278 / NCTC 2665 / VKM Ac-2230) (Micrococcus lysodeikticus).